Consider the following 487-residue polypeptide: Cytochrome P450 2C16 (487 aa).

C432 is a binding site for heme.

Belongs to the cytochrome P450 family. Heme is required as a cofactor. Expressed constitutively in liver, lung, testes, and kidney.

The protein localises to the endoplasmic reticulum membrane. It is found in the microsome membrane. The enzyme catalyses an organic molecule + reduced [NADPH--hemoprotein reductase] + O2 = an alcohol + oxidized [NADPH--hemoprotein reductase] + H2O + H(+). Its function is as follows. Cytochromes P450 are a group of heme-thiolate monooxygenases. In liver microsomes, this enzyme is involved in an NADPH-dependent electron transport pathway. It oxidizes a variety of structurally unrelated compounds, including steroids, fatty acids, and xenobiotics. This chain is Cytochrome P450 2C16 (CYP2C16), found in Oryctolagus cuniculus (Rabbit).